Consider the following 189-residue polypeptide: Ras-like protein 1 (189 aa).

A GTP-binding site is contributed by 10 to 17 (GGGGVGKS). The Effector region motif lies at 32–40 (YDPTIEDSY). GTP-binding positions include 57-61 (DTAGQ) and 116-119 (NKCD). A Cysteine methyl ester modification is found at C186. Residue C186 is the site of S-geranylgeranyl cysteine attachment. The propeptide at 187 to 189 (LLL) is removed in mature form.

This sequence belongs to the small GTPase superfamily. Ras family.

It is found in the cell membrane. It carries out the reaction GTP + H2O = GDP + phosphate + H(+). Ras proteins bind GDP/GTP and possess intrinsic GTPase activity. The protein is Ras-like protein 1 (RAS1) of Physarum polycephalum (Slime mold).